The primary structure comprises 429 residues: Protein arginine N-methyltransferase 2 (429 aa).

Disordered stretches follow at residues 41–76 (PEVA…EDHE) and 137–180 (ALDS…EETP). The segment covering 137–163 (ALDSDDEDDEEMAEGEEAQAEDGEEAP) has biased composition (acidic residues). Over residues 164–174 (ELVAAEEATQT) the composition is skewed to low complexity. The RMT2 domain maps to 190–429 (LEEQVTSDKY…YRLPVCTFLG (240 aa)). S-adenosyl-L-methionine-binding positions include Tyr-199, Met-228, 250–255 (FGMGII), 271–273 (EAH), 308–309 (WQ), and Asp-328.

This sequence belongs to the class I-like SAM-binding methyltransferase superfamily. RMT2 methyltransferase family. Monomer.

The protein localises to the cytoplasm. It localises to the nucleus. Its function is as follows. S-adenosyl-L-methionine-dependent protein-arginine N-methyltransferase that methylates the delta-nitrogen atom of arginine residues to form N5-methylarginine (type IV) in target proteins. Monomethylates ribosomal protein L12. This Neurospora crassa (strain ATCC 24698 / 74-OR23-1A / CBS 708.71 / DSM 1257 / FGSC 987) protein is Protein arginine N-methyltransferase 2.